The primary structure comprises 320 residues: Small ribosomal subunit protein uS2 (320 aa).

The segment covering 1–22 has biased composition (acidic residues); the sequence is MADETTTDTPDVQDEDAPDEDA. A disordered region spans residues 1-83; that stretch reads MADETTTDTP…SSSEEETSHR (83 aa). The span at 27 to 41 shows a compositional bias: low complexity; it reads DDTASDSTGEAAAAD. Composition is skewed to acidic residues over residues 42–57 and 65–78; these read TDAD…EDAP and DDGD…SSEE.

The protein belongs to the universal ribosomal protein uS2 family.

The chain is Small ribosomal subunit protein uS2 from Salinibacter ruber (strain DSM 13855 / M31).